The primary structure comprises 217 residues: UPF0319 protein VP1009 (217 aa).

Residues 1–21 (MRLKTWIVAFFLGLFGTTVNA) form the signal peptide.

Belongs to the UPF0319 family.

This chain is UPF0319 protein VP1009, found in Vibrio parahaemolyticus serotype O3:K6 (strain RIMD 2210633).